Reading from the N-terminus, the 142-residue chain is 3-hydroxyacyl-[acyl-carrier-protein] dehydratase FabZ (142 aa).

His-48 is a catalytic residue.

It belongs to the thioester dehydratase family. FabZ subfamily.

Its subcellular location is the cytoplasm. The catalysed reaction is a (3R)-hydroxyacyl-[ACP] = a (2E)-enoyl-[ACP] + H2O. Its function is as follows. Involved in unsaturated fatty acids biosynthesis. Catalyzes the dehydration of short chain beta-hydroxyacyl-ACPs and long chain saturated and unsaturated beta-hydroxyacyl-ACPs. This Natranaerobius thermophilus (strain ATCC BAA-1301 / DSM 18059 / JW/NM-WN-LF) protein is 3-hydroxyacyl-[acyl-carrier-protein] dehydratase FabZ.